Reading from the N-terminus, the 139-residue chain is Small ribosomal subunit protein uS19 (139 aa).

Belongs to the universal ribosomal protein uS19 family.

Protein S19 forms a complex with S13 that binds strongly to the 16S ribosomal RNA. The polypeptide is Small ribosomal subunit protein uS19 (Ignicoccus hospitalis (strain KIN4/I / DSM 18386 / JCM 14125)).